Here is a 267-residue protein sequence, read N- to C-terminus: Undecaprenyl-diphosphatase (267 aa).

Helical transmembrane passes span 39-59 (PGLA…IWYF), 87-107 (VLYL…LNDL), 112-132 (FRSP…LWAV), 145-165 (VTLR…VPGV), 183-203 (PSVA…AVIV), 216-236 (LPLL…ISVL), and 244-264 (SFGV…ATLA).

The protein belongs to the UppP family.

It is found in the cell inner membrane. The enzyme catalyses di-trans,octa-cis-undecaprenyl diphosphate + H2O = di-trans,octa-cis-undecaprenyl phosphate + phosphate + H(+). In terms of biological role, catalyzes the dephosphorylation of undecaprenyl diphosphate (UPP). Confers resistance to bacitracin. This Gemmatimonas aurantiaca (strain DSM 14586 / JCM 11422 / NBRC 100505 / T-27) protein is Undecaprenyl-diphosphatase.